The following is a 468-amino-acid chain: ATP synthase subunit beta 1 (468 aa).

155–162 (GGAGVGKT) lines the ATP pocket.

The protein belongs to the ATPase alpha/beta chains family. In terms of assembly, F-type ATPases have 2 components, CF(1) - the catalytic core - and CF(0) - the membrane proton channel. CF(1) has five subunits: alpha(3), beta(3), gamma(1), delta(1), epsilon(1). CF(0) has three main subunits: a(1), b(2) and c(9-12). The alpha and beta chains form an alternating ring which encloses part of the gamma chain. CF(1) is attached to CF(0) by a central stalk formed by the gamma and epsilon chains, while a peripheral stalk is formed by the delta and b chains.

The protein resides in the cell inner membrane. The catalysed reaction is ATP + H2O + 4 H(+)(in) = ADP + phosphate + 5 H(+)(out). Functionally, produces ATP from ADP in the presence of a proton gradient across the membrane. The catalytic sites are hosted primarily by the beta subunits. This chain is ATP synthase subunit beta 1, found in Syntrophotalea carbinolica (strain DSM 2380 / NBRC 103641 / GraBd1) (Pelobacter carbinolicus).